Here is a 545-residue protein sequence, read N- to C-terminus: Phospholipase B-like 1 (545 aa).

The first 35 residues, 1 to 35, serve as a signal peptide directing secretion; the sequence is MSRHSQDERLGLPQPPALLPLLLLLLAVAVPLSQA. The N-linked (GlcNAc...) (high mannose) asparagine; alternate glycan is linked to Asn-68. Asn-68 carries N-linked (GlcNAc...) (hybrid) asparagine; alternate glycosylation. Residues 206 to 224 constitute a propeptide, removed in mature form; sequence LSPTKNSSLKFFKRWDMGH. N-linked (GlcNAc...) (high mannose) asparagine; alternate glycans are attached at residues Asn-305, Asn-363, and Asn-408. N-linked (GlcNAc...) (hybrid) asparagine; alternate glycosylation is found at Asn-305, Asn-363, and Asn-408. 2 disulfide bridges follow: Cys-467-Cys-472 and Cys-471-Cys-486. N-linked (GlcNAc...) (high mannose) asparagine; alternate glycosylation is present at Asn-523. N-linked (GlcNAc...) (hybrid) asparagine; alternate glycosylation is present at Asn-523.

This sequence belongs to the phospholipase B-like family. In terms of assembly, may form a homodimer, each monomer is composed of a chain A and a chain B. The maturation cleavages that produces chains A and B are required to open the putative substrate binding pocket. Both chains A and B remain associated in the mature protein.

The protein resides in the lysosome. Exhibits a weak phospholipase activity, acting on various phospholipids, including phosphatidylcholine, phosphatidylinositol, phosphatidylethanolamine and lysophospholipids. However, in view of the small size of the putative binding pocket, it has been proposed that it may act rather as an amidase or a peptidase. This Bos taurus (Bovine) protein is Phospholipase B-like 1 (PLBD1).